The chain runs to 947 residues: DNA mismatch repair protein MutS 2 (947 aa).

The tract at residues 623–643 (IPNDTHLGSGPVPASRDGSDD) is disordered. 659–666 (GPNMSGKS) contacts ATP. Residues 841 to 916 (AETADTGVEA…GAAAEDELPE (76 aa)) are disordered.

This sequence belongs to the DNA mismatch repair MutS family.

This protein is involved in the repair of mismatches in DNA. It is possible that it carries out the mismatch recognition step. This protein has a weak ATPase activity. This is DNA mismatch repair protein MutS 2 from Haloarcula marismortui (strain ATCC 43049 / DSM 3752 / JCM 8966 / VKM B-1809) (Halobacterium marismortui).